The following is a 733-amino-acid chain: Alpha,alpha-trehalose-phosphate synthase [UDP-forming] A (733 aa).

The protein in the N-terminal section; belongs to the glycosyltransferase 20 family. In the C-terminal section; belongs to the trehalose phosphatase family.

It carries out the reaction D-glucose 6-phosphate + UDP-alpha-D-glucose = alpha,alpha-trehalose 6-phosphate + UDP + H(+). In terms of biological role, synthesizes trehalose 6-phosphate, the precursor for the production of trehalose, the main carbohydrate storage reserve of the dormant spore. Trehalose accumulates in both prestalk and prespore cells and then is rapidly metabolized during terminal differentiation of stalk cells, while being stored in spores, where it serves as the principal energy and carbon source for germination. This is Alpha,alpha-trehalose-phosphate synthase [UDP-forming] A (tpsA) from Dictyostelium discoideum (Social amoeba).